A 182-amino-acid polypeptide reads, in one-letter code: Transmembrane protein 11 homolog, mitochondrial (182 aa).

Ser25 is modified (phosphoserine). 2 helical membrane-spanning segments follow: residues 70-89 (TAVA…RDRP) and 91-108 (IAAP…LYTV).

Belongs to the TMEM11 family.

The protein resides in the mitochondrion inner membrane. Plays a role in mitochondrial morphogenesis. This chain is Transmembrane protein 11 homolog, mitochondrial (Pmi), found in Drosophila melanogaster (Fruit fly).